Reading from the N-terminus, the 121-residue chain is MNTITHEEANTVQPPLFFTDSAASKVKELIEEEANQALKLRVFVSGGGCSGFQYGFTFDEIINEDDFVIEKQGVRLLVDSMSVQYLLGAEIDYQENAQGAQFVIKNPAAASTCGCGSSFSV.

Cys49, Cys113, and Cys115 together coordinate iron-sulfur cluster.

It belongs to the HesB/IscA family. Homodimer. Requires iron-sulfur cluster as cofactor.

In terms of biological role, required for insertion of 4Fe-4S clusters. The chain is Putative iron-sulfur cluster insertion protein ErpA from Nitrosomonas eutropha (strain DSM 101675 / C91 / Nm57).